We begin with the raw amino-acid sequence, 83 residues long: Small ribosomal subunit protein bS16 (83 aa).

The protein belongs to the bacterial ribosomal protein bS16 family.

The chain is Small ribosomal subunit protein bS16 from Syntrophus aciditrophicus (strain SB).